A 172-amino-acid polypeptide reads, in one-letter code: Small ribosomal subunit protein uS13c (172 aa).

The transit peptide at 1–47 (MAHTLATPVAPSVSLICNTKLSVSLSSSSLAFRPVNPKNGGGLSIKC) directs the protein to the chloroplast.

Component of the chloroplast small ribosomal subunit (SSU). Mature 70S chloroplast ribosomes of higher plants consist of a small (30S) and a large (50S) subunit. The 30S small subunit contains 1 molecule of ribosomal RNA (16S rRNA) and 24 different proteins. The 50S large subunit contains 3 rRNA molecules (23S, 5S and 4.5S rRNA) and 33 different proteins. uS13c interacts with translation factor pY (PSRP1).

It is found in the plastid. The protein resides in the chloroplast. Its function is as follows. Component of the chloroplast ribosome (chloro-ribosome), a dedicated translation machinery responsible for the synthesis of chloroplast genome-encoded proteins, including proteins of the transcription and translation machinery and components of the photosynthetic apparatus. This is Small ribosomal subunit protein uS13c (RPS13) from Spinacia oleracea (Spinach).